We begin with the raw amino-acid sequence, 494 residues long: Nuclear distribution protein PAC1 (494 aa).

The LisH domain maps to 14 to 46; it reads QKNELDKSVLRYLNWNYKQTVRHEHAQDYESVR. Residues 90-123 are a coiled coil; it reads NSIVRLQKKIIELEQNTETLVSQIKDLNTQVSEL. 7 WD repeats span residues 153 to 192, 196 to 244, 251 to 292, 295 to 334, 347 to 395, 415 to 454, and 457 to 492; these read NVES…IPLA, SHTK…CKFQ, GHEH…SLKT, PHSQ…SVGT, HFIE…LMAH, GHLS…HVWE, and HTGF…SNVF.

It belongs to the WD repeat LIS1/nudF family. As to quaternary structure, self-associates. Interacts with NDL1 and dynein.

It is found in the cytoplasm. The protein resides in the cytoskeleton. The protein localises to the spindle pole. Positively regulates the activity of the minus-end directed microtubule motor protein dynein. Plays a central role in positioning the mitotic spindle at the bud neck during cell division. Targets cytoplasmic dynein to microtubule plus ends, thereby promoting dynein-mediated microtubule sliding along the bud cortex and consequently the movement of the mitotic spindle to the bud neck. The sequence is that of Nuclear distribution protein PAC1 from Saccharomyces cerevisiae (strain RM11-1a) (Baker's yeast).